The sequence spans 424 residues: MLPLIDGKEVKRRWSGRLLAREGVAARVREIIAAVKREGQAAVERYTLELDGVDLKEAGFRVTREEIGAAYRAVSPDLLEALRIARDNIATYHRRQPRGSWMETAADGTILGQICRPLGRVGLYVPGGTAAYPSSVLMTAVPARVAGVREIALATPPRRDGTLPPLLLVAAAEAGVEEIYKMGGAQAVAALAYGTEKVAPVDKIAGPGNIYVTLAKKEVYGQVDIDMLAGPSEIVVIADGKARPDWVAADLLSQAEHDALAGAVLITPDAGLARAVGEEVTRQLEALPRREIASRSLADYGAAVVVTGLDAAMDLANSLAPEHLELYVSEPWSWLGRVENAGAIFLGPYSSEPLGDYLAGPSHVLPTGGTARFYSPLSVDTFLKKSSLIACNRAGFRAAAGYIQALARAEGLEGHARAIELREE.

The NAD(+) site is built by Tyr-124, Gln-186, and Asn-209. 3 residues coordinate substrate: Ser-232, Gln-254, and His-257. Zn(2+) is bound by residues Gln-254 and His-257. Residues Glu-322 and His-323 each act as proton acceptor in the active site. Substrate contacts are provided by His-323, Asp-356, Glu-410, and His-415. Residue Asp-356 coordinates Zn(2+). His-415 contacts Zn(2+).

It belongs to the histidinol dehydrogenase family. It depends on Zn(2+) as a cofactor.

It catalyses the reaction L-histidinol + 2 NAD(+) + H2O = L-histidine + 2 NADH + 3 H(+). Its pathway is amino-acid biosynthesis; L-histidine biosynthesis; L-histidine from 5-phospho-alpha-D-ribose 1-diphosphate: step 9/9. In terms of biological role, catalyzes the sequential NAD-dependent oxidations of L-histidinol to L-histidinaldehyde and then to L-histidine. This is Histidinol dehydrogenase from Moorella thermoacetica (strain ATCC 39073 / JCM 9320).